The following is a 108-amino-acid chain: Pyrimidine/purine nucleoside phosphorylase (108 aa).

The protein belongs to the nucleoside phosphorylase PpnP family.

The catalysed reaction is a purine D-ribonucleoside + phosphate = a purine nucleobase + alpha-D-ribose 1-phosphate. The enzyme catalyses adenosine + phosphate = alpha-D-ribose 1-phosphate + adenine. It catalyses the reaction cytidine + phosphate = cytosine + alpha-D-ribose 1-phosphate. It carries out the reaction guanosine + phosphate = alpha-D-ribose 1-phosphate + guanine. The catalysed reaction is inosine + phosphate = alpha-D-ribose 1-phosphate + hypoxanthine. The enzyme catalyses thymidine + phosphate = 2-deoxy-alpha-D-ribose 1-phosphate + thymine. It catalyses the reaction uridine + phosphate = alpha-D-ribose 1-phosphate + uracil. It carries out the reaction xanthosine + phosphate = alpha-D-ribose 1-phosphate + xanthine. Catalyzes the phosphorolysis of diverse nucleosides, yielding D-ribose 1-phosphate and the respective free bases. Can use uridine, adenosine, guanosine, cytidine, thymidine, inosine and xanthosine as substrates. Also catalyzes the reverse reactions. This is Pyrimidine/purine nucleoside phosphorylase from Acinetobacter baumannii (strain AB307-0294).